A 423-amino-acid chain; its full sequence is Lysosomal acid phosphatase (423 aa).

A signal peptide spans 1 to 30 (MAGRRFGWSRAALLQLILGVNLMVMPRTQA). Over 31–380 (RTLRFVTLLY…QLAGGPADTE (350 aa)) the chain is Lumenal. His42 acts as the Nucleophile in catalysis. N-linked (GlcNAc...) asparagine glycans are attached at residues Asn92, Asn133, Asn167, Asn177, Asn191, and Asn267. Cystine bridges form between Cys159-Cys370, Cys212-Cys310, and Cys345-Cys349. Residue Asp287 is the Proton donor of the active site. N-linked (GlcNAc...) asparagine glycans are attached at residues Asn322 and Asn331. A helical membrane pass occupies residues 381–401 (VIVALAVCGSILFLLIVLLLT). Residues 402–423 (VLFRVQAQPPGYRHVPDGEDHA) lie on the Cytoplasmic side of the membrane.

It belongs to the histidine acid phosphatase family. Post-translationally, the membrane-bound form is converted to the soluble form by sequential proteolytic processing. First, the C-terminal cytoplasmic tail is removed. Cleavage by a lysosomal protease releases the soluble form in the lysosome lumen.

The protein resides in the lysosome membrane. It is found in the lysosome lumen. It carries out the reaction a phosphate monoester + H2O = an alcohol + phosphate. The chain is Lysosomal acid phosphatase (ACP2) from Bos taurus (Bovine).